Reading from the N-terminus, the 328-residue chain is Flagellar motor switch protein FliM (328 aa).

Residues 1–45 (MSDVLSQEEINQLIEALMKGELKEEDLLKEEEEKKVKPYDFKRPS) form an interaction with unphosphorylated CheY region.

It belongs to the FliM family. In terms of assembly, interacts (via N-terminus) with unphosphorylated CheY. Interacts (via central domain) with FliG (via central domain or via central domain and C-terminus).

Its subcellular location is the cell inner membrane. It localises to the bacterial flagellum basal body. FliM is one of three proteins (FliG, FliN, FliM) that forms the rotor-mounted switch complex (C ring), located at the base of the basal body. This complex interacts with the CheY and CheX chemotaxis proteins, in addition to contacting components of the motor that determine the direction of flagellar rotation. The chain is Flagellar motor switch protein FliM from Thermotoga maritima (strain ATCC 43589 / DSM 3109 / JCM 10099 / NBRC 100826 / MSB8).